A 385-amino-acid chain; its full sequence is uncharacterized protein (385 aa).

Zn(2+) is bound by residues Asp-180, His-258, and His-275.

Belongs to the iron-containing alcohol dehydrogenase family. It depends on Zn(2+) as a cofactor.

This is an uncharacterized protein from Synechocystis sp. (strain ATCC 27184 / PCC 6803 / Kazusa).